We begin with the raw amino-acid sequence, 296 residues long: 4-hydroxy-tetrahydrodipicolinate synthase (296 aa).

Thr-49 contributes to the pyruvate binding site. The active-site Proton donor/acceptor is Tyr-137. The Schiff-base intermediate with substrate role is filled by Lys-166. A pyruvate-binding site is contributed by Ile-208.

It belongs to the DapA family. Homotetramer; dimer of dimers.

The protein resides in the cytoplasm. The catalysed reaction is L-aspartate 4-semialdehyde + pyruvate = (2S,4S)-4-hydroxy-2,3,4,5-tetrahydrodipicolinate + H2O + H(+). The protein operates within amino-acid biosynthesis; L-lysine biosynthesis via DAP pathway; (S)-tetrahydrodipicolinate from L-aspartate: step 3/4. Functionally, catalyzes the condensation of (S)-aspartate-beta-semialdehyde [(S)-ASA] and pyruvate to 4-hydroxy-tetrahydrodipicolinate (HTPA). This Pelodictyon phaeoclathratiforme (strain DSM 5477 / BU-1) protein is 4-hydroxy-tetrahydrodipicolinate synthase.